Here is a 274-residue protein sequence, read N- to C-terminus: Large ribosomal subunit protein uL2 (274 aa).

Positions 224–256 are disordered; that stretch reads VMNPVDHPHGGGEGKTGEGRHPVDPWGNLTKGY. Basic and acidic residues predominate over residues 229–246; that stretch reads DHPHGGGEGKTGEGRHPV.

The protein belongs to the universal ribosomal protein uL2 family. As to quaternary structure, part of the 50S ribosomal subunit. Forms a bridge to the 30S subunit in the 70S ribosome.

One of the primary rRNA binding proteins. Required for association of the 30S and 50S subunits to form the 70S ribosome, for tRNA binding and peptide bond formation. It has been suggested to have peptidyltransferase activity; this is somewhat controversial. Makes several contacts with the 16S rRNA in the 70S ribosome. The sequence is that of Large ribosomal subunit protein uL2 from Polaromonas naphthalenivorans (strain CJ2).